A 485-amino-acid chain; its full sequence is Subtilisin-like protease 1 (485 aa).

An N-terminal signal peptide occupies residues 1–19 (MGIFRFISISLAAVSAANA). Residues 20 to 116 (GHILSMGHAK…VEPDTTITIH (97 aa)) constitute a propeptide that is removed on maturation. Positions 34 to 116 (SYIVVMKDGT…VEPDTTITIH (83 aa)) constitute an Inhibitor I9 domain. A Peptidase S8 domain is found at 126–400 (SWGLARISSQ…NILINNGDAK (275 aa)). Active-site charge relay system residues include Asp-158 and His-190. N-linked (GlcNAc...) asparagine glycosylation occurs at Asn-251. Ser-345 (charge relay system) is an active-site residue. Residues 377-394 (GTSSVTNPGPGTRTNILI) show a composition bias toward polar residues. The segment at 377-462 (GTSSVTNPGP…HTPFPNDDFN (86 aa)) is disordered. A compositionally biased stretch (pro residues) spans 409-418 (PSQPPKPSQP). Positions 419-428 (SKPQQPSEPQ) are enriched in low complexity. Residues 433–455 (PQEPAPGQPAPAPAPVPQHPHTP) show a composition bias toward pro residues.

Belongs to the peptidase S8 family.

The protein localises to the secreted. Functionally, secreted subtilisin-like serine protease with keratinolytic activity that contributes to pathogenicity. This is Subtilisin-like protease 1 (SUB1) from Arthroderma otae (Microsporum canis).